Consider the following 509-residue polypeptide: Bifunctional purine biosynthesis protein PurH (509 aa).

One can recognise an MGS-like domain in the interval 1 to 146 (MTIQKINRVL…KNWYRVGVCV (146 aa)).

The protein belongs to the PurH family.

The enzyme catalyses (6R)-10-formyltetrahydrofolate + 5-amino-1-(5-phospho-beta-D-ribosyl)imidazole-4-carboxamide = 5-formamido-1-(5-phospho-D-ribosyl)imidazole-4-carboxamide + (6S)-5,6,7,8-tetrahydrofolate. It catalyses the reaction IMP + H2O = 5-formamido-1-(5-phospho-D-ribosyl)imidazole-4-carboxamide. It participates in purine metabolism; IMP biosynthesis via de novo pathway; 5-formamido-1-(5-phospho-D-ribosyl)imidazole-4-carboxamide from 5-amino-1-(5-phospho-D-ribosyl)imidazole-4-carboxamide (10-formyl THF route): step 1/1. Its pathway is purine metabolism; IMP biosynthesis via de novo pathway; IMP from 5-formamido-1-(5-phospho-D-ribosyl)imidazole-4-carboxamide: step 1/1. The chain is Bifunctional purine biosynthesis protein PurH from Natranaerobius thermophilus (strain ATCC BAA-1301 / DSM 18059 / JW/NM-WN-LF).